Reading from the N-terminus, the 435-residue chain is ATP-dependent protease ATPase subunit HslU (435 aa).

ATP contacts are provided by residues isoleucine 18, 60-65 (GVGKTE), aspartate 248, glutamate 313, and arginine 385.

Belongs to the ClpX chaperone family. HslU subfamily. A double ring-shaped homohexamer of HslV is capped on each side by a ring-shaped HslU homohexamer. The assembly of the HslU/HslV complex is dependent on binding of ATP.

Its subcellular location is the cytoplasm. ATPase subunit of a proteasome-like degradation complex; this subunit has chaperone activity. The binding of ATP and its subsequent hydrolysis by HslU are essential for unfolding of protein substrates subsequently hydrolyzed by HslV. HslU recognizes the N-terminal part of its protein substrates and unfolds these before they are guided to HslV for hydrolysis. This is ATP-dependent protease ATPase subunit HslU from Rhizobium etli (strain CIAT 652).